We begin with the raw amino-acid sequence, 429 residues long: Glutamyl-tRNA reductase (429 aa).

Substrate is bound by residues Thr-49–Arg-52, Ser-107, Glu-112–Gln-114, and Gln-118. Catalysis depends on Cys-50, which acts as the Nucleophile. Gly-187 to Ile-192 contacts NADP(+).

This sequence belongs to the glutamyl-tRNA reductase family. Homodimer.

The catalysed reaction is (S)-4-amino-5-oxopentanoate + tRNA(Glu) + NADP(+) = L-glutamyl-tRNA(Glu) + NADPH + H(+). The protein operates within porphyrin-containing compound metabolism; protoporphyrin-IX biosynthesis; 5-aminolevulinate from L-glutamyl-tRNA(Glu): step 1/2. Functionally, catalyzes the NADPH-dependent reduction of glutamyl-tRNA(Glu) to glutamate 1-semialdehyde (GSA). In Pseudomonas fluorescens (strain SBW25), this protein is Glutamyl-tRNA reductase.